The sequence spans 147 residues: Large ribosomal subunit protein uL15 (147 aa).

The segment covering 1–20 (MTLRLNDLKPADGARTERTR) has biased composition (basic and acidic residues). Positions 1 to 61 (MTLRLNDLKP…GFEGGQTPMQ (61 aa)) are disordered. Gly residues predominate over residues 23 to 33 (RGIGSGLGKTA). Residues 34–47 (GRGHKGSFARKGGG) are compositionally biased toward basic residues.

It belongs to the universal ribosomal protein uL15 family. As to quaternary structure, part of the 50S ribosomal subunit.

Its function is as follows. Binds to the 23S rRNA. The polypeptide is Large ribosomal subunit protein uL15 (Xanthomonas euvesicatoria pv. vesicatoria (strain 85-10) (Xanthomonas campestris pv. vesicatoria)).